The primary structure comprises 234 residues: uncharacterized protein (234 aa).

The next 6 helical transmembrane spans lie at 5–23 (LFYI…LWSF), 38–60 (IPTA…GFWV), 73–92 (AHIQ…AHGW), 127–149 (AITL…YIWL), 170–192 (GVAI…TVIS), and 197–217 (TQAG…ALAF).

The protein localises to the cell membrane. This is an uncharacterized protein from Archaeoglobus fulgidus (strain ATCC 49558 / DSM 4304 / JCM 9628 / NBRC 100126 / VC-16).